The chain runs to 374 residues: DNA integrity scanning protein DisA (374 aa).

Residues 20 to 158 form the DAC domain; that stretch reads EALMRASLSA…DGERRVLEES (139 aa). Residues glycine 87, leucine 105, and 118–122 contribute to the ATP site; that span reads TRHRT.

Belongs to the DisA family. Homooctamer. Mg(2+) serves as cofactor.

It catalyses the reaction 2 ATP = 3',3'-c-di-AMP + 2 diphosphate. Participates in a DNA-damage check-point that is active prior to asymmetric division when DNA is damaged. DisA forms globular foci that rapidly scan along the chromosomes during sporulation, searching for lesions. When a lesion is present, DisA pauses at the lesion site. This triggers a cellular response that culminates in a temporary block in sporulation initiation. Functionally, also has diadenylate cyclase activity, catalyzing the condensation of 2 ATP molecules into cyclic di-AMP (c-di-AMP). c-di-AMP acts as a signaling molecule that couples DNA integrity with progression of sporulation. The rise in c-di-AMP level generated by DisA while scanning the chromosome, operates as a positive signal that advances sporulation; upon encountering a lesion, the DisA focus arrests at the damaged site and halts c-di-AMP synthesis. In Streptomyces griseus subsp. griseus (strain JCM 4626 / CBS 651.72 / NBRC 13350 / KCC S-0626 / ISP 5235), this protein is DNA integrity scanning protein DisA.